Here is a 179-residue protein sequence, read N- to C-terminus: Peptide deformylase (179 aa).

Positions 102 and 144 each coordinate Fe cation. Glu-145 is an active-site residue. His-148 contributes to the Fe cation binding site.

This sequence belongs to the polypeptide deformylase family. Fe(2+) serves as cofactor.

It carries out the reaction N-terminal N-formyl-L-methionyl-[peptide] + H2O = N-terminal L-methionyl-[peptide] + formate. In terms of biological role, removes the formyl group from the N-terminal Met of newly synthesized proteins. Requires at least a dipeptide for an efficient rate of reaction. N-terminal L-methionine is a prerequisite for activity but the enzyme has broad specificity at other positions. The protein is Peptide deformylase of Wolbachia pipientis wMel.